The following is a 304-amino-acid chain: Protease HtpX homolog (304 aa).

2 helical membrane-spanning segments follow: residues F19–F39 and L41–Y61. H146 lines the Zn(2+) pocket. The active site involves E147. H150 contacts Zn(2+). 2 helical membrane-spanning segments follow: residues V156–L176 and N192–L212. E221 contributes to the Zn(2+) binding site.

Belongs to the peptidase M48B family. It depends on Zn(2+) as a cofactor.

The protein resides in the cell inner membrane. In Dictyoglomus turgidum (strain DSM 6724 / Z-1310), this protein is Protease HtpX homolog.